Here is a 30-residue protein sequence, read N- to C-terminus: Root cyclotide 1 (30 aa).

Positions 1–30 form a cross-link, cyclopeptide (Gly-Asn); that stretch reads GIPCAESCVWIPCTVTALLGCSCSNKVCYN. Intrachain disulfides connect Cys4–Cys21, Cys8–Cys23, and Cys13–Cys28.

This is a cyclic peptide. In terms of tissue distribution, expressed in roots.

Its function is as follows. Probably participates in a plant defense mechanism. The sequence is that of Root cyclotide 1 from Viola hederacea (Australian violet).